The sequence spans 433 residues: Protein FAM98B (433 aa).

A disordered region spans residues G303–Y433. The span at V305–E314 shows a compositional bias: basic and acidic residues. Over residues G331 to Y433 the composition is skewed to gly residues.

It belongs to the FAM98 family. Homodimer. Component of the tRNA-splicing ligase complex. Interacts with FAM98A. Expressed strongly in colorectal cancer tissues compared to wild-type colon samples (at protein level). Expressed strongly in colorectal cancer tissues compared to wild-type colon samples.

It localises to the nucleus. The protein resides in the cytoplasm. Positively stimulates PRMT1-induced protein arginine dimethylated arginine methylation. This is Protein FAM98B (FAM98B) from Homo sapiens (Human).